A 269-amino-acid chain; its full sequence is Tryptophan synthase alpha chain (269 aa).

Catalysis depends on proton acceptor residues Glu41 and Asp52.

The protein belongs to the TrpA family. Tetramer of two alpha and two beta chains.

The catalysed reaction is (1S,2R)-1-C-(indol-3-yl)glycerol 3-phosphate + L-serine = D-glyceraldehyde 3-phosphate + L-tryptophan + H2O. The protein operates within amino-acid biosynthesis; L-tryptophan biosynthesis; L-tryptophan from chorismate: step 5/5. In terms of biological role, the alpha subunit is responsible for the aldol cleavage of indoleglycerol phosphate to indole and glyceraldehyde 3-phosphate. The sequence is that of Tryptophan synthase alpha chain from Geobacillus stearothermophilus (Bacillus stearothermophilus).